The primary structure comprises 79 residues: MDPKAFVSGMAALGAGIAALACIGAGIGTGNATGKAVEGVSRQPEASGKIMSTLVIGSAFSEATAIYGLIIALFLIFKI.

2 consecutive transmembrane segments (helical) span residues 7 to 27 (VSGM…GAGI) and 56 to 76 (IGSA…LFLI).

The protein belongs to the ATPase C chain family. As to quaternary structure, F-type ATPases have 2 components, F(1) - the catalytic core - and F(0) - the membrane proton channel. F(1) has five subunits: alpha(3), beta(3), gamma(1), delta(1), epsilon(1). F(0) has three main subunits: a(1), b(2) and c(10-14). The alpha and beta chains form an alternating ring which encloses part of the gamma chain. F(1) is attached to F(0) by a central stalk formed by the gamma and epsilon chains, while a peripheral stalk is formed by the delta and b chains.

It localises to the cell membrane. Functionally, f(1)F(0) ATP synthase produces ATP from ADP in the presence of a proton or sodium gradient. F-type ATPases consist of two structural domains, F(1) containing the extramembraneous catalytic core and F(0) containing the membrane proton channel, linked together by a central stalk and a peripheral stalk. During catalysis, ATP synthesis in the catalytic domain of F(1) is coupled via a rotary mechanism of the central stalk subunits to proton translocation. Key component of the F(0) channel; it plays a direct role in translocation across the membrane. A homomeric c-ring of between 10-14 subunits forms the central stalk rotor element with the F(1) delta and epsilon subunits. The chain is ATP synthase subunit c from Clostridium botulinum (strain Hall / ATCC 3502 / NCTC 13319 / Type A).